A 445-amino-acid polypeptide reads, in one-letter code: Exodeoxyribonuclease 7 large subunit (445 aa).

Belongs to the XseA family. In terms of assembly, heterooligomer composed of large and small subunits.

It localises to the cytoplasm. The enzyme catalyses Exonucleolytic cleavage in either 5'- to 3'- or 3'- to 5'-direction to yield nucleoside 5'-phosphates.. In terms of biological role, bidirectionally degrades single-stranded DNA into large acid-insoluble oligonucleotides, which are then degraded further into small acid-soluble oligonucleotides. The polypeptide is Exodeoxyribonuclease 7 large subunit (Staphylococcus haemolyticus (strain JCSC1435)).